Consider the following 110-residue polypeptide: Progonadoliberin-2 (110 aa).

Positions 1–26 (MASIGQGLVLLLLLLLLTAQPGPLKA) are cleaved as a signal peptide. The interval 25–85 (KAQHWSHGWY…KALAPPEDTV (61 aa)) is disordered. Residue Gly-36 is modified to Glycine amide.

It belongs to the GnRH family. Midbrain.

It localises to the secreted. Stimulates the secretion of gonadotropins; it stimulates the secretion of both luteinizing and follicle-stimulating hormones. The sequence is that of Progonadoliberin-2 (GNRH2) from Suncus murinus (Asian house shrew).